Consider the following 316-residue polypeptide: Mycothiol acetyltransferase (316 aa).

N-acetyltransferase domains are found at residues arginine 16–valine 153 and valine 156–asparagine 316. Residue glutamate 36 coordinates 1D-myo-inositol 2-(L-cysteinylamino)-2-deoxy-alpha-D-glucopyranoside. Residues leucine 83–valine 85 and arginine 91–serine 96 contribute to the acetyl-CoA site. 1D-myo-inositol 2-(L-cysteinylamino)-2-deoxy-alpha-D-glucopyranoside-binding residues include glutamate 183, lysine 228, and glutamate 238. Residues valine 242–valine 244 and glutamine 249–glutamine 255 each bind acetyl-CoA. Tyrosine 283 is a 1D-myo-inositol 2-(L-cysteinylamino)-2-deoxy-alpha-D-glucopyranoside binding site. Position 288–293 (asparagine 288–arginine 293) interacts with acetyl-CoA.

The protein belongs to the acetyltransferase family. MshD subfamily. Monomer.

The enzyme catalyses 1D-myo-inositol 2-(L-cysteinylamino)-2-deoxy-alpha-D-glucopyranoside + acetyl-CoA = mycothiol + CoA + H(+). In terms of biological role, catalyzes the transfer of acetyl from acetyl-CoA to desacetylmycothiol (Cys-GlcN-Ins) to form mycothiol. This chain is Mycothiol acetyltransferase, found in Mycobacterium avium (strain 104).